A 410-amino-acid chain; its full sequence is S-adenosylmethionine synthase (410 aa).

Residue His21 participates in ATP binding. Asp23 lines the Mg(2+) pocket. Position 49 (Glu49) interacts with K(+). Positions 62 and 105 each coordinate L-methionine. Positions 105–115 (QSQEIGAGVDQ) are flexible loop. A disordered region spans residues 107-133 (QEIGAGVDQSHEVRSGENTDADDQAGA). Residues 180-182 (DGK), Asp261, 267-268 (RK), Ala284, and Lys288 contribute to the ATP site. Asp261 lines the L-methionine pocket. An L-methionine-binding site is contributed by Lys292.

It belongs to the AdoMet synthase family. As to quaternary structure, homotetramer; dimer of dimers. Mg(2+) serves as cofactor. The cofactor is K(+).

The protein resides in the cytoplasm. The catalysed reaction is L-methionine + ATP + H2O = S-adenosyl-L-methionine + phosphate + diphosphate. It functions in the pathway amino-acid biosynthesis; S-adenosyl-L-methionine biosynthesis; S-adenosyl-L-methionine from L-methionine: step 1/1. Catalyzes the formation of S-adenosylmethionine (AdoMet) from methionine and ATP. The overall synthetic reaction is composed of two sequential steps, AdoMet formation and the subsequent tripolyphosphate hydrolysis which occurs prior to release of AdoMet from the enzyme. The polypeptide is S-adenosylmethionine synthase (Corynebacterium diphtheriae (strain ATCC 700971 / NCTC 13129 / Biotype gravis)).